Here is a 752-residue protein sequence, read N- to C-terminus: Coiled-coil domain-containing protein 157 (752 aa).

Over residues 135 to 154 the composition is skewed to polar residues; it reads QQPLPQKGANQRETPTSKPT. Disordered stretches follow at residues 135-163 and 316-336; these read QQPL…ARSP and QALK…EQCL. Coiled-coil stretches lie at residues 276-544 and 579-615; these read AAEQ…LLVA and DHME…VAQQ. A compositionally biased stretch (basic and acidic residues) spans 316–329; the sequence is QALKQEQGARRRQA. Disordered regions lie at residues 620–707 and 731–752; these read LIPQ…QPSK and RKRL…ERPM. Residues 628-648 are compositionally biased toward polar residues; the sequence is SPSSKGTQGATPPVQAKSTSP. Residues 671–692 show a composition bias toward pro residues; the sequence is TSPPRQPCTSPPRQPCTSPPRQ. The span at 693-707 shows a compositional bias: polar residues; sequence PCTSPSRQPCSQPSK.

In Homo sapiens (Human), this protein is Coiled-coil domain-containing protein 157 (CCDC157).